The following is a 466-amino-acid chain: Alpha-1A adrenergic receptor (466 aa).

The Extracellular segment spans residues 1–27 (MVFLSGNASDSSNCTHPPPPVNISKAI). N-linked (GlcNAc...) asparagine glycans are attached at residues Asn-7, Asn-13, and Asn-22. The chain crosses the membrane as a helical span at residues 28-51 (LLGVILGGLILFGVLGNILVILSV). Topologically, residues 52–64 (ACHRHLHSVTHYY) are cytoplasmic. Residues 65-88 (IVNLAVADLLLTSTVLPFSAIFEI) traverse the membrane as a helical segment. Residues 89-99 (LGYWAFGRVFC) lie on the Extracellular side of the membrane. Cys-99 and Cys-176 are oxidised to a cystine. A helical membrane pass occupies residues 100 to 122 (NVWAAVDVLCCTASIMGLCIISI). Residues 123–143 (DRYIGVSYPLRYPTIVTQKRG) are Cytoplasmic-facing. The helical transmembrane segment at 144–167 (LMALLCVWALSLVISIGPLFGWRQ) threads the bilayer. Residues 168–181 (PAPEDETICQINEE) are Extracellular-facing. Residues 182 to 205 (PGYVLFSALGSFYVPLTIILVMYC) traverse the membrane as a helical segment. Over 206–273 (RVYVVAKRES…FSREKKAAKT (68 aa)) the chain is Cytoplasmic. Ser-215 is modified (phosphoserine; by PKA). A helical transmembrane segment spans residues 274–297 (LGIVVGCFVLCWLPFFLVMPIGSF). At 298-305 (FPDFRPSE) the chain is on the extracellular side. A helical membrane pass occupies residues 306 to 329 (TVFKIAFWLGYLNSCINPIIYPCS). Over 330-466 (SQEFKKAFQN…ISLSENGEEV (137 aa)) the chain is Cytoplasmic. The short motif at 334 to 349 (KKAFQNVLRIQCLRRK) is the Nuclear localization signal element. A lipid anchor (S-palmitoyl cysteine) is attached at Cys-345.

Belongs to the G-protein coupled receptor 1 family. Adrenergic receptor subfamily. ADRA1A sub-subfamily. In terms of assembly, homo- and heterooligomer. Heterooligomerizes with ADRA1B homooligomers in cardiac myocytes. Interacts with CAVIN4.

It is found in the nucleus membrane. The protein resides in the cell membrane. Its subcellular location is the cytoplasm. The protein localises to the membrane. It localises to the caveola. In terms of biological role, this alpha-adrenergic receptor mediates its action by association with G proteins that activate a phosphatidylinositol-calcium second messenger system. Its effect is mediated by G(q) and G(11) proteins. Nuclear ADRA1A-ADRA1B heterooligomers regulate phenylephrine (PE)-stimulated ERK signaling in cardiac myocytes. This is Alpha-1A adrenergic receptor (ADRA1A) from Bos taurus (Bovine).